A 505-amino-acid polypeptide reads, in one-letter code: Peroxisome proliferator-activated receptor gamma (505 aa).

Threonine 84 carries an O-linked (GlcNAc) threonine glycan. Serine 112 carries the post-translational modification Phosphoserine; by MAPK. Residues 136 to 210 (AIECRVCGDK…VGMSHNAIRF (75 aa)) constitute a DNA-binding region (nuclear receptor). 2 NR C4-type zinc fingers span residues 139-159 (CRVC…CEGC) and 176-198 (CDLN…FQKC). The interaction with FAM120B stretch occupies residues 205-280 (HNAIRFGRMP…DKSPFVIYDM (76 aa)). The NR LBD domain occupies 238 to 503 (DLRALAKHLY…HPLLQEIYKD (266 aa)). A Glycyl lysine isopeptide (Lys-Gly) (interchain with G-Cter in ubiquitin) cross-link involves residue lysine 252. The 9aaTAD motif lies at 495–503 (PLLQEIYKD).

The protein belongs to the nuclear hormone receptor family. NR1 subfamily. In terms of assembly, interacts with FOXO1 (acetylated form). Heterodimer with other nuclear receptors, such as RXRA. The heterodimer with the retinoic acid receptor RXRA is called adipocyte-specific transcription factor ARF6. Interacts with NCOA6 coactivator, leading to a strong increase in transcription of target genes. Interacts with coactivator PPARBP, leading to a mild increase in transcription of target genes. Interacts with NOCA7 in a ligand-inducible manner. Interacts with NCOA1 and NCOA2 LXXLL motifs. Interacts with ASXL1, ASXL2, DNTTIP2, FAM120B, MAP2K1/MEK1, NR0B2, PDPK1, PRDM16, PRMT2 and TGFB1I1. Interacts (when activated by agonist) with PPP5C. Interacts with HELZ2 and THRAP3; the interaction stimulates the transcriptional activity of PPARG. Interacts with PER2, the interaction is ligand dependent and blocks PPARG recruitment to target promoters. Interacts with NOCT. Interacts with ACTN4. Interacts (when in the liganded conformation) with GPS2. Interacts with CRY1 and CRY2 in a ligand-dependent manner. In the absence of hormonal ligand, interacts with TACC1. In macrophages, interacts with PAQR3 and STUB1; the interactions promote PPARG poylubiquitination and STUB1-mediated degradation. O-GlcNAcylation at Thr-84 reduces transcriptional activity in adipocytes. In terms of processing, phosphorylated at basal conditions and dephosphorylated when treated with the ligand. May be dephosphorylated by PPP5C. The phosphorylated form may be inactive and dephosphorylation induces adipogenic activity. Post-translationally, ubiquitinated by E3 ubiquitin-protein ligase complex containing FBXO9; leading to proteasomal degradation. Ubiquitinated at Lys-252 by TRIM55 leading to proteasomal degradation. Ubiquitinated by E3 ubiquitin-protein ligase STUB1/CHIP; leading to proteasomal degradation. As to expression, highest expression in adipose tissue. Lower in liver, heart, kidney, stomach, duodenum and colon.

It is found in the nucleus. The protein resides in the cytoplasm. PDPK1 activates its transcriptional activity independently of its kinase activity. Functionally, nuclear receptor that binds peroxisome proliferators such as hypolipidemic drugs and fatty acids. Once activated by a ligand, the nuclear receptor binds to DNA specific PPAR response elements (PPRE) and modulates the transcription of its target genes, such as acyl-CoA oxidase. It therefore controls the peroxisomal beta-oxidation pathway of fatty acids. Key regulator of adipocyte differentiation and glucose homeostasis. ARF6 acts as a key regulator of the tissue-specific adipocyte P2 (aP2) enhancer. Acts as a critical regulator of gut homeostasis by suppressing NF-kappa-B-mediated pro-inflammatory responses. Plays a role in the regulation of cardiovascular circadian rhythms by regulating the transcription of BMAL1 in the blood vessels. The chain is Peroxisome proliferator-activated receptor gamma (PPARG) from Macaca mulatta (Rhesus macaque).